Reading from the N-terminus, the 257-residue chain is 5'-nucleotidase SurE (257 aa).

A divalent metal cation is bound by residues Asp-8, Asp-9, Ser-40, and Asn-95.

Belongs to the SurE nucleotidase family. Requires a divalent metal cation as cofactor.

The protein localises to the cytoplasm. The catalysed reaction is a ribonucleoside 5'-phosphate + H2O = a ribonucleoside + phosphate. Functionally, nucleotidase that shows phosphatase activity on nucleoside 5'-monophosphates. This Desulfovibrio desulfuricans (strain ATCC 27774 / DSM 6949 / MB) protein is 5'-nucleotidase SurE.